The chain runs to 401 residues: Phosphoglycerate kinase (401 aa).

Substrate-binding positions include 24-26 (DFN), arginine 40, 63-66 (HFGR), arginine 122, and arginine 155. ATP is bound by residues lysine 206, glycine 297, glutamate 328, and 357 to 360 (GGDS).

This sequence belongs to the phosphoglycerate kinase family. Monomer.

It localises to the cytoplasm. It catalyses the reaction (2R)-3-phosphoglycerate + ATP = (2R)-3-phospho-glyceroyl phosphate + ADP. It functions in the pathway carbohydrate degradation; glycolysis; pyruvate from D-glyceraldehyde 3-phosphate: step 2/5. This chain is Phosphoglycerate kinase, found in Acaryochloris marina (strain MBIC 11017).